Here is a 538-residue protein sequence, read N- to C-terminus: Bifunctional purine biosynthesis protein PurH (538 aa).

Residues 8-158 enclose the MGS-like domain; the sequence is IPAPDKVEIK…KNHAYVTILT (151 aa).

The protein belongs to the PurH family.

It catalyses the reaction (6R)-10-formyltetrahydrofolate + 5-amino-1-(5-phospho-beta-D-ribosyl)imidazole-4-carboxamide = 5-formamido-1-(5-phospho-D-ribosyl)imidazole-4-carboxamide + (6S)-5,6,7,8-tetrahydrofolate. The catalysed reaction is IMP + H2O = 5-formamido-1-(5-phospho-D-ribosyl)imidazole-4-carboxamide. Its pathway is purine metabolism; IMP biosynthesis via de novo pathway; 5-formamido-1-(5-phospho-D-ribosyl)imidazole-4-carboxamide from 5-amino-1-(5-phospho-D-ribosyl)imidazole-4-carboxamide (10-formyl THF route): step 1/1. The protein operates within purine metabolism; IMP biosynthesis via de novo pathway; IMP from 5-formamido-1-(5-phospho-D-ribosyl)imidazole-4-carboxamide: step 1/1. The chain is Bifunctional purine biosynthesis protein PurH from Rhizobium etli (strain CIAT 652).